Here is a 352-residue protein sequence, read N- to C-terminus: MIETDKFSAPDRVISATPASSREEAFERALRPKLLDEYVGQEKVRGQLDIFMHAARNRREALDHVLLFGPPGLGKTTLAHIIAREMGVNLRQTSGPVLERPGDLAALLTNLEANDVLFIDEIHRLSPVVEEILYPALEDYQIDIMIGEGPAARSVKLDLQPFTLVGATTRAGMLTNPLRDRFGIVARLEFYTAEELARIVTRSAQLLGAHIDPLGSLEIARRARGTPRIANRLLRRVRDYAEVKGDGTITREIADAALAMLDVDRVGFDLMDRKLLEAVLHKFGGGPVGVDNLAAAIGEERDTIEDVLEPYLIQQGYLQRTPRGRVATAAAYRHFGLASPQAGDSGDLIDGE.

Residues 4 to 191 (TDKFSAPDRV…FGIVARLEFY (188 aa)) form a large ATPase domain (RuvB-L) region. Residues Leu-30, Arg-31, Gly-72, Lys-75, Thr-76, Thr-77, 138–140 (EDY), Arg-181, Tyr-191, and Arg-228 each bind ATP. Mg(2+) is bound at residue Thr-76. The segment at 192 to 262 (TAEELARIVT…IADAALAMLD (71 aa)) is small ATPAse domain (RuvB-S). Residues 265–352 (RVGFDLMDRK…GDSGDLIDGE (88 aa)) form a head domain (RuvB-H) region. DNA contacts are provided by Arg-301, Arg-320, and Arg-325.

Belongs to the RuvB family. As to quaternary structure, homohexamer. Forms an RuvA(8)-RuvB(12)-Holliday junction (HJ) complex. HJ DNA is sandwiched between 2 RuvA tetramers; dsDNA enters through RuvA and exits via RuvB. An RuvB hexamer assembles on each DNA strand where it exits the tetramer. Each RuvB hexamer is contacted by two RuvA subunits (via domain III) on 2 adjacent RuvB subunits; this complex drives branch migration. In the full resolvosome a probable DNA-RuvA(4)-RuvB(12)-RuvC(2) complex forms which resolves the HJ.

Its subcellular location is the cytoplasm. It catalyses the reaction ATP + H2O = ADP + phosphate + H(+). Functionally, the RuvA-RuvB-RuvC complex processes Holliday junction (HJ) DNA during genetic recombination and DNA repair, while the RuvA-RuvB complex plays an important role in the rescue of blocked DNA replication forks via replication fork reversal (RFR). RuvA specifically binds to HJ cruciform DNA, conferring on it an open structure. The RuvB hexamer acts as an ATP-dependent pump, pulling dsDNA into and through the RuvAB complex. RuvB forms 2 homohexamers on either side of HJ DNA bound by 1 or 2 RuvA tetramers; 4 subunits per hexamer contact DNA at a time. Coordinated motions by a converter formed by DNA-disengaged RuvB subunits stimulates ATP hydrolysis and nucleotide exchange. Immobilization of the converter enables RuvB to convert the ATP-contained energy into a lever motion, pulling 2 nucleotides of DNA out of the RuvA tetramer per ATP hydrolyzed, thus driving DNA branch migration. The RuvB motors rotate together with the DNA substrate, which together with the progressing nucleotide cycle form the mechanistic basis for DNA recombination by continuous HJ branch migration. Branch migration allows RuvC to scan DNA until it finds its consensus sequence, where it cleaves and resolves cruciform DNA. The chain is Holliday junction branch migration complex subunit RuvB from Cupriavidus pinatubonensis (strain JMP 134 / LMG 1197) (Cupriavidus necator (strain JMP 134)).